Here is a 255-residue protein sequence, read N- to C-terminus: Ribosomal RNA small subunit methyltransferase A (255 aa).

S-adenosyl-L-methionine is bound by residues Asn-12, Leu-14, Gly-39, Glu-60, Asp-84, and Asn-102.

Belongs to the class I-like SAM-binding methyltransferase superfamily. rRNA adenine N(6)-methyltransferase family. RsmA subfamily.

It localises to the cytoplasm. It carries out the reaction adenosine(1518)/adenosine(1519) in 16S rRNA + 4 S-adenosyl-L-methionine = N(6)-dimethyladenosine(1518)/N(6)-dimethyladenosine(1519) in 16S rRNA + 4 S-adenosyl-L-homocysteine + 4 H(+). Specifically dimethylates two adjacent adenosines (A1518 and A1519) in the loop of a conserved hairpin near the 3'-end of 16S rRNA in the 30S particle. May play a critical role in biogenesis of 30S subunits. The protein is Ribosomal RNA small subunit methyltransferase A of Methylobacillus flagellatus (strain ATCC 51484 / DSM 6875 / VKM B-1610 / KT).